Here is a 569-residue protein sequence, read N- to C-terminus: Glutamate--tRNA ligase (569 aa).

The 'HIGH' region motif lies at 108-118 (PNPDFVLHLGS).

This sequence belongs to the class-I aminoacyl-tRNA synthetase family. Glutamate--tRNA ligase type 2 subfamily.

It is found in the cytoplasm. The catalysed reaction is tRNA(Glu) + L-glutamate + ATP = L-glutamyl-tRNA(Glu) + AMP + diphosphate. Catalyzes the attachment of glutamate to tRNA(Glu) in a two-step reaction: glutamate is first activated by ATP to form Glu-AMP and then transferred to the acceptor end of tRNA(Glu). The protein is Glutamate--tRNA ligase of Thermofilum pendens (strain DSM 2475 / Hrk 5).